Here is a 162-residue protein sequence, read N- to C-terminus: Ribose-5-phosphate isomerase B (162 aa).

Residues 11–12 and 70–74 each bind D-ribulose 5-phosphate; these read DH and GSGNG. The active-site Proton acceptor is Glu-75. The active-site Proton donor is His-102. Positions 103, 113, 137, and 141 each coordinate D-ribulose 5-phosphate.

It belongs to the LacAB/RpiB family. As to quaternary structure, homodimer.

It carries out the reaction aldehydo-D-ribose 5-phosphate = D-ribulose 5-phosphate. Its pathway is carbohydrate degradation; pentose phosphate pathway; D-ribose 5-phosphate from D-ribulose 5-phosphate (non-oxidative stage): step 1/1. Functionally, catalyzes the interconversion of ribulose-5-P and ribose-5-P. The polypeptide is Ribose-5-phosphate isomerase B (Mycobacterium bovis (strain ATCC BAA-935 / AF2122/97)).